The sequence spans 404 residues: Pyruvate-flavodoxin oxidoreductase (404 aa).

It belongs to the pyruvate:ferredoxin/flavodoxin oxidoreductase family.

It catalyses the reaction oxidized [flavodoxin] + pyruvate + CoA + 2 H(+) = reduced [flavodoxin] + acetyl-CoA + CO2. Its function is as follows. Oxidoreductase required for the transfer of electrons from pyruvate to flavodoxin, which reduces nitrogenase. The polypeptide is Pyruvate-flavodoxin oxidoreductase (nifJ) (Nostoc sp. (strain ATCC 29151 / PCC 7119) (Anabaena sp.)).